The chain runs to 46 residues: Amine oxidase [flavin-containing] A (46 aa).

The protein belongs to the flavin monoamine oxidase family. In terms of assembly, monomer, homo- or heterodimer (containing two subunits of similar size). Each subunit contains a covalently bound flavin. Enzymatically active as monomer. The cofactor is FAD.

It is found in the mitochondrion outer membrane. The enzyme catalyses a secondary aliphatic amine + O2 + H2O = a primary amine + an aldehyde + H2O2. It catalyses the reaction a primary methyl amine + O2 + H2O = an aldehyde + H2O2 + NH4(+). The catalysed reaction is (R)-adrenaline + O2 + H2O = (R)-3,4-dihydroxymandelaldehyde + methylamine + H2O2. It carries out the reaction dopamine + O2 + H2O = 3,4-dihydroxyphenylacetaldehyde + H2O2 + NH4(+). The enzyme catalyses tyramine + O2 + H2O = (4-hydroxyphenyl)acetaldehyde + H2O2 + NH4(+). It catalyses the reaction (R)-noradrenaline + O2 + H2O = (R)-3,4-dihydroxymandelaldehyde + H2O2 + NH4(+). The catalysed reaction is serotonin + O2 + H2O = (5-hydroxyindol-3-yl)acetaldehyde + H2O2 + NH4(+). It carries out the reaction kynuramine + O2 + H2O = 3-(2-aminophenyl)-3-oxopropanal + H2O2 + NH4(+). The enzyme catalyses tryptamine + O2 + H2O = indole-3-acetaldehyde + H2O2 + NH4(+). It catalyses the reaction 2-phenylethylamine + O2 + H2O = 2-phenylacetaldehyde + H2O2 + NH4(+). In terms of biological role, catalyzes the oxidative deamination of primary and some secondary amine such as neurotransmitters, with concomitant reduction of oxygen to hydrogen peroxide and has important functions in the metabolism of neuroactive and vasoactive amines in the central nervous system and peripheral tissues. Preferentially oxidizes serotonin. Also catalyzes the oxidative deamination of kynuramine to 3-(2-aminophenyl)-3-oxopropanal that can spontaneously condense to 4-hydroxyquinoline. The polypeptide is Amine oxidase [flavin-containing] A (Ovis aries (Sheep)).